The following is a 51-amino-acid chain: Small ribosomal subunit protein eS31 (51 aa).

Positions 22, 25, 40, and 43 each coordinate Zn(2+). A C4-type zinc finger spans residues 22–43 (CVRCSHGIFMADHGDRYACGRC).

It belongs to the eukaryotic ribosomal protein eS31 family. Part of the 30S ribosomal subunit. Zn(2+) serves as cofactor.

The chain is Small ribosomal subunit protein eS31 from Methanosphaera stadtmanae (strain ATCC 43021 / DSM 3091 / JCM 11832 / MCB-3).